The chain runs to 338 residues: Probable O-antigen biosynthesis glycosyltransferase WbiN (338 aa).

This sequence belongs to the glycosyltransferase group 1 family. Glycosyltransferase 4 subfamily.

The enzyme catalyses N-acetyl-alpha-D-galactosaminyl-di-trans,octa-cis-undecaprenyl diphosphate + UDP-N-acetyl-alpha-D-galactosamine = alpha-D-GalNAc-(1-&gt;3)-alpha-D-GalNAc-di-trans,octa-cis-undecaprenyl diphosphate + UDP + H(+). It functions in the pathway bacterial outer membrane biogenesis; LPS O-antigen biosynthesis. Its function is as follows. Involved in the assembly of the O-repeating unit during O-antigen biosynthesis. The sequence is that of Probable O-antigen biosynthesis glycosyltransferase WbiN from Escherichia coli.